The sequence spans 171 residues: Group 1 truncated hemoglobin LI410 (171 aa).

The transit peptide at Met1–Ala23 directs the protein to the chloroplast. The heme site is built by Tyr63 and His111.

Belongs to the truncated hemoglobin family. Group I subfamily. Requires heme as cofactor.

It localises to the plastid. It is found in the chloroplast. This chain is Group 1 truncated hemoglobin LI410 (LI410), found in Chlamydomonas moewusii (Chlamydomonas eugametos).